The sequence spans 265 residues: Cell division protein DivIB (265 aa).

The Cytoplasmic portion of the chain corresponds to 1–30 (MKNSKVIKLQDRVPKLKNQQKKKKKNVNHR). Residues 31–51 (LILYISILFLLVLFLIYFRSP) form a helical membrane-spanning segment. Residues 52–265 (LSNIKKISVF…NRMIVFNTLS (214 aa)) are Extracellular-facing. The POTRA domain maps to 53–121 (SNIKKISVFG…NKIDVHIEEY (69 aa)).

The protein belongs to the FtsQ/DivIB family. DivIB subfamily.

It localises to the cell membrane. Cell division protein that may be involved in stabilizing or promoting the assembly of the division complex. The polypeptide is Cell division protein DivIB (Bacillus anthracis).